The chain runs to 608 residues: MTAVFDASAFLATCSNRPGVYRMFDADAKLLYVGKAKSLKKRLASYFRKSGLAPKTAALVVRIAQVETTITANETEALLLEQTLIKEWRPPYNILLRDDKSYPFVFLSSEDEYPRLSLHRGAKKRKGRYFGPYPSAGAIRESLNLLQKAFLVRQCEDSYFRNRTRPCLQYQIKRCKGPCVGLVGPEEYAEDVRHSVMFLEGRSNALADELNTGMEQAAMRLDFEKAAELRDQVAILRRVQDQQSMEGGNGDVDIVAAIVTPGGACVHLISVRGGRVLGSKNFFPQVAIEEEVGEVLLAFLGQYYLSHQERDLPAELIVNVMHEDFPVLVAAIAEARGRQLEISYRVRGTRARWQQLAVTNAEQALGARLANRQHVAARFEALAEALDLAEPPQRLECFDISHSSGEATVASCVVFGPEGPLKSDYRRYNIEGVTAGDDYAAMHQALTRRFSRLKEGEGKMPDILLVDGGKGQLAMAQEVLQELAVAGLILLGVAKGVTRKPGLETLYLNDAAHEFTLPADSPALHLIQQIRDEAHRFAITGHRARRGKARRTSTLEDVPGVGPKRRRDLLKHFGGLQELSRASIDELAKAPGISKKLAEQIYAVLHSE.

The GIY-YIG domain maps to Asn-16–Ile-94. A UVR domain is found at Asn-204–Val-239.

The protein belongs to the UvrC family. Interacts with UvrB in an incision complex.

The protein resides in the cytoplasm. Functionally, the UvrABC repair system catalyzes the recognition and processing of DNA lesions. UvrC both incises the 5' and 3' sides of the lesion. The N-terminal half is responsible for the 3' incision and the C-terminal half is responsible for the 5' incision. This is UvrABC system protein C from Pseudomonas paraeruginosa (strain DSM 24068 / PA7) (Pseudomonas aeruginosa (strain PA7)).